The chain runs to 439 residues: Serine hydroxymethyltransferase (439 aa).

Residue 126–128 participates in (6S)-5,6,7,8-tetrahydrofolate binding; sequence AHV. Lys232 is subject to N6-(pyridoxal phosphate)lysine.

Belongs to the SHMT family. Homodimer. Requires pyridoxal 5'-phosphate as cofactor.

The protein resides in the cytoplasm. Its pathway is amino-acid biosynthesis; glycine biosynthesis; glycine from L-serine: step 1/1. Catalyzes the reversible interconversion of serine and glycine with a modified folate serving as the one-carbon carrier. Also exhibits a pteridine-independent aldolase activity toward beta-hydroxyamino acids, producing glycine and aldehydes, via a retro-aldol mechanism. The protein is Serine hydroxymethyltransferase of Staphylothermus marinus (strain ATCC 43588 / DSM 3639 / JCM 9404 / F1).